The primary structure comprises 415 residues: Multidrug resistance protein MdtA (415 aa).

Residues 1–21 form the signal peptide; the sequence is MKGSYKSRWVIVIVVVIAAIA. 2 disordered regions span residues 32–60 and 392–415; these read SRSAAPGATKQAQQSPAGGRRGMRSGPLA and EAQSATTPEEKATSREYAKKGARS. The segment covering 399-415 has biased composition (basic and acidic residues); it reads PEEKATSREYAKKGARS.

It belongs to the membrane fusion protein (MFP) (TC 8.A.1) family. Part of a tripartite efflux system composed of MdtA, MdtB and MdtC.

The protein localises to the cell inner membrane. Functionally, the MdtABC tripartite complex confers resistance against novobiocin and deoxycholate. In Escherichia coli (strain K12 / MC4100 / BW2952), this protein is Multidrug resistance protein MdtA.